We begin with the raw amino-acid sequence, 930 residues long: Translation initiation factor IF-2 (930 aa).

A compositionally biased stretch (low complexity) spans 50 to 67 (FKPAAAPKVEAKPAAPKV). 2 disordered regions span residues 50-217 (FKPA…SSEE) and 260-346 (EVVP…HELP). 2 stretches are compositionally biased toward basic and acidic residues: residues 68-90 (SAEK…EAKP) and 110-125 (FKAE…AERR). Over residues 129-141 (KGNNRDQQQNGNR) the composition is skewed to low complexity. 2 stretches are compositionally biased toward basic and acidic residues: residues 157-167 (RDNRRFNDQAK) and 262-295 (VPEK…DGPR). Positions 309–318 (NQKNSNWNNN) are enriched in low complexity. Residues 337–346 (VTERKFHELP) are compositionally biased toward basic and acidic residues. Residues 432–599 (ERPPVVTIMG…TVLLVAEIQE (168 aa)) form the tr-type G domain. A G1 region spans residues 441 to 448 (GHVDHGKT). Residue 441–448 (GHVDHGKT) coordinates GTP. Positions 466–470 (GITQH) are G2. The interval 487 to 490 (DTPG) is G3. Residues 487–491 (DTPGH) and 541–544 (NKID) contribute to the GTP site. The interval 541–544 (NKID) is G4. The tract at residues 577-579 (SAK) is G5.

The protein belongs to the TRAFAC class translation factor GTPase superfamily. Classic translation factor GTPase family. IF-2 subfamily.

It is found in the cytoplasm. One of the essential components for the initiation of protein synthesis. Protects formylmethionyl-tRNA from spontaneous hydrolysis and promotes its binding to the 30S ribosomal subunits. Also involved in the hydrolysis of GTP during the formation of the 70S ribosomal complex. In Streptococcus pneumoniae (strain CGSP14), this protein is Translation initiation factor IF-2.